Reading from the N-terminus, the 366-residue chain is GTP cyclohydrolase 1 type 2 homolog (366 aa).

Zn(2+) contacts are provided by histidine 64, histidine 65, aspartate 102, histidine 326, and glutamate 329.

It belongs to the GTP cyclohydrolase I type 2/NIF3 family. In terms of assembly, homohexamer.

This Staphylococcus aureus (strain COL) protein is GTP cyclohydrolase 1 type 2 homolog.